A 158-amino-acid polypeptide reads, in one-letter code: Methylated-DNA--protein-cysteine methyltransferase (158 aa).

The Nucleophile; methyl group acceptor role is filled by Cys126.

It belongs to the MGMT family.

Its subcellular location is the cytoplasm. The catalysed reaction is a 6-O-methyl-2'-deoxyguanosine in DNA + L-cysteinyl-[protein] = S-methyl-L-cysteinyl-[protein] + a 2'-deoxyguanosine in DNA. The enzyme catalyses a 4-O-methyl-thymidine in DNA + L-cysteinyl-[protein] = a thymidine in DNA + S-methyl-L-cysteinyl-[protein]. Involved in the cellular defense against the biological effects of O6-methylguanine (O6-MeG) and O4-methylthymine (O4-MeT) in DNA. Repairs the methylated nucleobase in DNA by stoichiometrically transferring the methyl group to a cysteine residue in the enzyme. This is a suicide reaction: the enzyme is irreversibly inactivated. The sequence is that of Methylated-DNA--protein-cysteine methyltransferase from Methanosarcina mazei (strain ATCC BAA-159 / DSM 3647 / Goe1 / Go1 / JCM 11833 / OCM 88) (Methanosarcina frisia).